Consider the following 425-residue polypeptide: Monoacylglycerol lipase ABHD2 (425 aa).

Residues 1-9 (MNAMLETPE) are Cytoplasmic-facing. The chain crosses the membrane as a helical; Signal-anchor for type II membrane protein span at residues 10–30 (LPAVFDGVKLAAVAAVLYVIV). The Extracellular segment spans residues 31–425 (RCLNLKSPTA…DTEQVEADLE (395 aa)). The AB hydrolase-1 domain maps to 128 to 382 (MVICPGIANH…HGGHLGFFEG (255 aa)). Residue N136 is glycosylated (N-linked (GlcNAc...) asparagine). The active-site Nucleophile is the S207. Residues D345 and H376 each act as charge relay system in the active site.

The protein belongs to the AB hydrolase superfamily. AB hydrolase 4 family. As to expression, present in sperm (at protein level).

The protein resides in the cell projection. It is found in the cilium. It localises to the flagellum membrane. The protein localises to the cell membrane. The catalysed reaction is an acetyl ester + H2O = an aliphatic alcohol + acetate + H(+). The enzyme catalyses Hydrolyzes glycerol monoesters of long-chain fatty acids.. It carries out the reaction a triacylglycerol + H2O = a diacylglycerol + a fatty acid + H(+). It catalyses the reaction 2-(5Z,8Z,11Z,14Z-eicosatetraenoyl)-glycerol + H2O = glycerol + (5Z,8Z,11Z,14Z)-eicosatetraenoate + H(+). The catalysed reaction is a butanoate ester + H2O = an aliphatic alcohol + butanoate + H(+). The enzyme catalyses hexadecanoate ester + H2O = an aliphatic alcohol + hexadecanoate + H(+). With respect to regulation, acylglycerol lipase activity is activated upon binding to progesterone. Functionally, progesterone-dependent acylglycerol lipase that catalyzes hydrolysis of endocannabinoid arachidonoylglycerol (AG) from cell membrane. Acts as a progesterone receptor: progesterone-binding activates the acylglycerol lipase activity, mediating degradation of 1-arachidonoylglycerol (1AG) and 2-arachidonoylglycerol (2AG) to glycerol and arachidonic acid (AA). Also displays an ester hydrolase activity against acetyl ester, butanoate ester and hexadecanoate ester. Plays a key role in sperm capacitation in response to progesterone by mediating degradation of 2AG, an inhibitor of the sperm calcium channel CatSper, leading to calcium influx via CatSper and sperm activation. May also play a role in smooth muscle cells migration. The protein is Monoacylglycerol lipase ABHD2 of Homo sapiens (Human).